The sequence spans 160 residues: Small ribosomal subunit protein uS9 (160 aa).

It belongs to the universal ribosomal protein uS9 family.

This Cereibacter sphaeroides (strain ATCC 17029 / ATH 2.4.9) (Rhodobacter sphaeroides) protein is Small ribosomal subunit protein uS9.